A 311-amino-acid chain; its full sequence is Aspartate carbamoyltransferase catalytic subunit (311 aa).

Carbamoyl phosphate-binding residues include R55 and T56. K85 is a binding site for L-aspartate. Residues R106, H135, and Q138 each contribute to the carbamoyl phosphate site. R168 and R230 together coordinate L-aspartate. The carbamoyl phosphate site is built by L268 and P269.

It belongs to the aspartate/ornithine carbamoyltransferase superfamily. ATCase family. Heterododecamer (2C3:3R2) of six catalytic PyrB chains organized as two trimers (C3), and six regulatory PyrI chains organized as three dimers (R2).

It catalyses the reaction carbamoyl phosphate + L-aspartate = N-carbamoyl-L-aspartate + phosphate + H(+). It functions in the pathway pyrimidine metabolism; UMP biosynthesis via de novo pathway; (S)-dihydroorotate from bicarbonate: step 2/3. Its function is as follows. Catalyzes the condensation of carbamoyl phosphate and aspartate to form carbamoyl aspartate and inorganic phosphate, the committed step in the de novo pyrimidine nucleotide biosynthesis pathway. The chain is Aspartate carbamoyltransferase catalytic subunit from Yersinia pseudotuberculosis serotype O:1b (strain IP 31758).